Consider the following 567-residue polypeptide: Myo-inositol transporter 1 (567 aa).

Residues 1 to 88 (MSARPAQPNI…KFVWMLVSAA (88 aa)) lie on the Cytoplasmic side of the membrane. The disordered stretch occupies residues 14-42 (IRTSLSGYPSPTHSGSSTPASLEFSDGRL). Over residues 16–33 (TSLSGYPSPTHSGSSTPA) the composition is skewed to polar residues. A helical membrane pass occupies residues 89–109 (AISGLLFGYDTAAISGMLVII). Residues 110-123 (KDDLGTILSSWQKE) are Extracellular-facing. Residues 124 to 144 (VITSATTLGALLGGLAAGCVS) traverse the membrane as a helical segment. At 145-150 (DFTGRR) the chain is on the cytoplasmic side. The helical transmembrane segment at 151–171 (LVIVFANVAFIGGSICQAACH) threads the bilayer. At 172-180 (TVAAMIAGR) the chain is on the extracellular side. Residues 181–201 (FIVGLGVGLASCIVPLYIGEL) traverse the membrane as a helical segment. Residues 202–209 (APTMIRGR) lie on the Cytoplasmic side of the membrane. Residues 210 to 230 (LVTINCVAVTLGQVVAYAIGA) traverse the membrane as a helical segment. Over 231 to 240 (SFQNVHNGWR) the chain is Extracellular. Residues 241 to 261 (WIVGLGAMPSFVQLAAIGFLP) traverse the membrane as a helical segment. Residues 262 to 343 (ESPRILLLRS…IGCGLQAAQQ (82 aa)) are Cytoplasmic-facing. Residues 344 to 364 (LCGFNTLMYYSATIFAMLGFN) traverse the membrane as a helical segment. An N-linked (GlcNAc...) asparagine glycan is attached at asparagine 365. Over 365-367 (NAT) the chain is Extracellular. Residues 368 to 388 (AVGLIVATVNVLFTLVALKIV) form a helical membrane-spanning segment. The Cytoplasmic portion of the chain corresponds to 389-397 (DPVGRRRTM). The chain crosses the membrane as a helical span at residues 398 to 418 (LFTLPIMILALVFAAIFFYYL). Residues 419–435 (TLSTNGILIEDHDYPRS) are Extracellular-facing. The helical transmembrane segment at 436 to 456 (LSILVLLSMLLYVAGYATGLG) threads the bilayer. Residues 457–476 (NIPWQQGELFRLEVRGIGTS) lie on the Cytoplasmic side of the membrane. The chain crosses the membrane as a helical span at residues 477–497 (ICTAVNWSCNMLIAGTFLSLM). Residues 498–503 (DAATPS) are Extracellular-facing. A helical transmembrane segment spans residues 504–524 (GAFGIYAGFCVIGWVFCWMLY). Topologically, residues 525 to 567 (PETSGLSLEEVYFVFEEGFGIKKSQQLRKQKLVEAAKLKAIFE) are cytoplasmic.

It belongs to the major facilitator superfamily. Sugar transporter (TC 2.A.1.1) family.

Its subcellular location is the cell membrane. It carries out the reaction myo-inositol(out) + H(+)(out) = myo-inositol(in) + H(+)(in). In terms of biological role, may function as a transporter or as a sensor for myo-inositol. This chain is Myo-inositol transporter 1, found in Cryptococcus neoformans var. grubii serotype A (strain H99 / ATCC 208821 / CBS 10515 / FGSC 9487) (Filobasidiella neoformans var. grubii).